The primary structure comprises 325 residues: Methionine import ATP-binding protein MetN 3 (325 aa).

The 238-residue stretch at 2–239 (IEVQQLCKVY…PQSALGRALL (238 aa)) folds into the ABC transporter domain. An ATP-binding site is contributed by 36-43 (GRSGAGKS).

Belongs to the ABC transporter superfamily. Methionine importer (TC 3.A.1.24) family. The complex is composed of two ATP-binding proteins (MetN), two transmembrane proteins (MetI) and a solute-binding protein (MetQ).

Its subcellular location is the cell inner membrane. The catalysed reaction is L-methionine(out) + ATP + H2O = L-methionine(in) + ADP + phosphate + H(+). It carries out the reaction D-methionine(out) + ATP + H2O = D-methionine(in) + ADP + phosphate + H(+). In terms of biological role, part of the ABC transporter complex MetNIQ involved in methionine import. Responsible for energy coupling to the transport system. The chain is Methionine import ATP-binding protein MetN 3 from Pseudomonas fluorescens (strain ATCC BAA-477 / NRRL B-23932 / Pf-5).